The following is a 202-amino-acid chain: ATP-dependent Clp protease proteolytic subunit (202 aa).

The active-site Nucleophile is the Ser106. His131 is an active-site residue.

The protein belongs to the peptidase S14 family. In terms of assembly, fourteen ClpP subunits assemble into 2 heptameric rings which stack back to back to give a disk-like structure with a central cavity, resembling the structure of eukaryotic proteasomes.

The protein resides in the cytoplasm. It carries out the reaction Hydrolysis of proteins to small peptides in the presence of ATP and magnesium. alpha-casein is the usual test substrate. In the absence of ATP, only oligopeptides shorter than five residues are hydrolyzed (such as succinyl-Leu-Tyr-|-NHMec, and Leu-Tyr-Leu-|-Tyr-Trp, in which cleavage of the -Tyr-|-Leu- and -Tyr-|-Trp bonds also occurs).. Its function is as follows. Cleaves peptides in various proteins in a process that requires ATP hydrolysis. Has a chymotrypsin-like activity. Plays a major role in the degradation of misfolded proteins. The chain is ATP-dependent Clp protease proteolytic subunit from Verminephrobacter eiseniae (strain EF01-2).